The primary structure comprises 580 residues: 9,13-epoxylabda-14-ene synthase, chloroplastic (580 aa).

The transit peptide at 1–32 (MSITFNLKIAPFSGPGIQRSKETFPATEIQIT) directs the protein to the chloroplast. 5 residues coordinate Mg(2+): Asp-322, Asp-326, Asn-466, Thr-470, and Glu-474. Positions 322 to 326 (DDFFD) match the DDXXD motif motif.

This sequence belongs to the terpene synthase family. Mg(2+) serves as cofactor. In terms of tissue distribution, present in both leaves and flowers, with higher levels in leaves.

It localises to the plastid. The protein localises to the chloroplast. The enzyme catalyses peregrinol diphosphate = (13R)-9,13-epoxylabd-14-ene + diphosphate. It carries out the reaction (+)-copalyl diphosphate = miltiradiene + diphosphate. The catalysed reaction is 8-hydroxycopalyl diphosphate = (13R)-manoyl oxide + diphosphate. The protein operates within secondary metabolite biosynthesis; terpenoid biosynthesis. Involved in the biosynthesis of labdane-type diterpenoid including marrubiin and other labdane-related furanoid diterpenoids with potential applications as anti-diabetics, analgesics or vasorelaxants. Terpene synthase the catalyzes the conversion of peregrinol diphosphate to 9,13(R)-epoxy-labd-14-ene, from (+)-copalyl diphosphate ((+)-CPP) to miltiradiene and from 8-hydroxycopalyl diphosphate (LPP, labda-13-en-8-ol diphosphate) to manoyl oxide. In Marrubium vulgare (White horehound), this protein is 9,13-epoxylabda-14-ene synthase, chloroplastic.